The primary structure comprises 465 residues: MSQGKIVQIIGAVVDVEFPRDMIPRVYDALKLDENGLTLEVQQLLGDGVVRTIAMGSSDGLKRGMTVSNTGAPITVPVGKGTLGRIVDVLGTPVDEAGPIDTDKSRAIHQAAPKFDELSSTTELLETGIKVIDLLCPFAKGGKVGLFGGAGVGKTVNMMELINNIAKAHSGLSVFAGVGERTREGNDFYHEMKDSNVLDKVAMVYGQMNEPPGNRLRVALTGLTMAEYFRDEKDENGKGRDVLFFVDNIYRYTLAGTEVSALLGRMPSAVGYQPTLAEEMGCLQERITSTQTGSITSIQAVYVPADDLTDPSPATTFAHLDATVVLSRDIASLGIYPAVDPLDSTSRQLDPMVLGQEHYDVARGVQSTLQKYKELRDIIAILGMDELSDEDKLTVMRARKIQRFLSQPFHVAEVFTGSPGKYVALRDTIAGFKAILNGEYDYLPEQAFYMVGSIEEAVEKAKTLN.

Residue 148–155 (GGAGVGKT) participates in ATP binding.

It belongs to the ATPase alpha/beta chains family. As to quaternary structure, F-type ATPases have 2 components, CF(1) - the catalytic core - and CF(0) - the membrane proton channel. CF(1) has five subunits: alpha(3), beta(3), gamma(1), delta(1), epsilon(1). CF(0) has three main subunits: a(1), b(2) and c(9-12). The alpha and beta chains form an alternating ring which encloses part of the gamma chain. CF(1) is attached to CF(0) by a central stalk formed by the gamma and epsilon chains, while a peripheral stalk is formed by the delta and b chains.

The protein localises to the cell inner membrane. The catalysed reaction is ATP + H2O + 4 H(+)(in) = ADP + phosphate + 5 H(+)(out). Its function is as follows. Produces ATP from ADP in the presence of a proton gradient across the membrane. The catalytic sites are hosted primarily by the beta subunits. In Neisseria meningitidis serogroup A / serotype 4A (strain DSM 15465 / Z2491), this protein is ATP synthase subunit beta.